Consider the following 330-residue polypeptide: mRNA-capping enzyme (330 aa).

The active-site N6-GMP-lysine intermediate is the lysine 82.

It belongs to the eukaryotic GTase family. In terms of assembly, monomer. Mg(2+) is required as a cofactor. Mn(2+) serves as cofactor.

The catalysed reaction is a 5'-end diphospho-ribonucleoside in mRNA + GTP + H(+) = a 5'-end (5'-triphosphoguanosine)-ribonucleoside in mRNA + diphosphate. MRNA capping. Transfers a GMP cap onto the end of mRNA that terminates with a 5'-diphosphate tail. The sequence is that of mRNA-capping enzyme from Chlorella (PBCV-1).